We begin with the raw amino-acid sequence, 816 residues long: H(+)/Cl(-) exchange transporter 5 (816 aa).

Positions 1–26 are disordered; the sequence is MAMWQGAMDNRGFQQGSFSSFQNSSS. Topologically, residues 1 to 124 are cytoplasmic; sequence MAMWQGAMDN…WALIHSVSDA (124 aa). The segment covering 12 to 25 has biased composition (low complexity); it reads GFQQGSFSSFQNSS. 2 helical membrane-spanning segments follow: residues 125-162 and 208-231; these read FSGWLLMLLIGLLSGSLAGLIDISAHWMTDLKEGICTG and VNYFMYVLWALLFAFLAVSLVKVF. Residues 237–241 carry the Selectivity filter part_1 motif; sequence GSGIP. Ser-238 is a binding site for chloride. Positions 240–247 form an intramembrane region, helical; it reads IPEIKTIL. The next 2 membrane-spanning stretches (helical) occupy residues 256-275 and 281-300; these read LGKWTLVIKTITLVLAVSSG and EGPLVHVACCCGNILCHCFN. The short motif at 279 to 283 is the Selectivity filter part_2 element; it reads GKEGP. 2 intramembrane regions (helical) span residues 312-324 and 328-336; these read VLSAAAAAGVSVA and PIGGVLFSL. Helical transmembrane passes span 348–366, 389–415, 422–442, 498–518, and 523–542; these read LWRSFFAALVAAFTLRSIN, LVPFILLGIFGGLWGALFIRTNIAWCR, LGKYPVIEVLVVTAITAILAF, MWQLALTLILKIVITIFTFGM, and GLFIPSMAVGAIAGRLLGVG. The Selectivity filter part_3 signature appears at 523-527; that stretch reads GLFIP. Residue Phe-525 participates in chloride binding. Positions 570–584 form an intramembrane region, helical; sequence GLYAMVGAAACLGGV. The note=Loop between two helices intramembrane region spans 585-587; it reads TRM. The segment at residues 588–599 is an intramembrane region (helical); the sequence is TVSLVVIMFELT. The segment at residues 600 to 604 is an intramembrane region (note=Loop between two helices); it reads GGLEY. Residues 605 to 622 form a helical membrane-spanning segment; that stretch reads IVPLMAAAMTSKWVADAL. At 623-816 the chain is on the cytoplasmic side; the sequence is GREGIYDAHI…NQDPDSILFN (194 aa). Residue Tyr-628 coordinates chloride. CBS domains are found at residues 656 to 720 and 752 to 812; these read MKPR…ARKK and ILDL…DPDS. Residues Thr-666, 687–689, and 794–797 each bind ATP; these read YSG and TKKD.

It belongs to the chloride channel (TC 2.A.49) family. ClC-5/CLCN5 subfamily. In terms of assembly, interacts with NEDD4 and NEDD4L. Ubiquitinated by NEDD4L in the presence of albumin; which promotes endocytosis and proteasomal degradation. Kidney. Moderately expressed in aortic vascular smooth muscle and endothelial cells, and at a slightly higher level in the coronary vascular smooth muscle.

It is found in the golgi apparatus membrane. Its subcellular location is the endosome membrane. The protein resides in the cell membrane. It catalyses the reaction 2 chloride(in) + H(+)(out) = 2 chloride(out) + H(+)(in). In terms of biological role, proton-coupled chloride transporter. Functions as antiport system and exchanges chloride ions against protons. Important for normal acidification of the endosome lumen. May play an important role in renal tubular function. The CLC channel family contains both chloride channels and proton-coupled anion transporters that exchange chloride or another anion for protons. The absence of conserved gating glutamate residues is typical for family members that function as channels. The sequence is that of H(+)/Cl(-) exchange transporter 5 from Homo sapiens (Human).